Here is a 159-residue protein sequence, read N- to C-terminus: Phosphopantetheine adenylyltransferase (159 aa).

T10 contacts substrate. Residues 10-11 and H18 contribute to the ATP site; that span reads TF. Substrate-binding residues include K42, L74, and R88. Residues 89-91, E99, and 124-130 each bind ATP; these read GLR and NAFISSS.

Belongs to the bacterial CoaD family. As to quaternary structure, homohexamer. Mg(2+) is required as a cofactor.

The protein resides in the cytoplasm. The enzyme catalyses (R)-4'-phosphopantetheine + ATP + H(+) = 3'-dephospho-CoA + diphosphate. The protein operates within cofactor biosynthesis; coenzyme A biosynthesis; CoA from (R)-pantothenate: step 4/5. Functionally, reversibly transfers an adenylyl group from ATP to 4'-phosphopantetheine, yielding dephospho-CoA (dPCoA) and pyrophosphate. The polypeptide is Phosphopantetheine adenylyltransferase (Campylobacter fetus subsp. fetus (strain 82-40)).